The sequence spans 260 residues: Ribosomal RNA small subunit methyltransferase J (260 aa).

S-adenosyl-L-methionine is bound by residues 125-126 (ER) and D179. Positions 234–260 (IDGPKPSHALDGKSSRYDIYPKKALKP) are disordered. The segment covering 241-254 (HALDGKSSRYDIYP) has biased composition (basic and acidic residues).

Belongs to the methyltransferase superfamily. RsmJ family.

The protein localises to the cytoplasm. The catalysed reaction is guanosine(1516) in 16S rRNA + S-adenosyl-L-methionine = N(2)-methylguanosine(1516) in 16S rRNA + S-adenosyl-L-homocysteine + H(+). Its function is as follows. Specifically methylates the guanosine in position 1516 of 16S rRNA. This is Ribosomal RNA small subunit methyltransferase J from Pseudomonas fluorescens (strain SBW25).